The following is a 310-amino-acid chain: Thymidine kinase (310 aa).

17–24 (GPFGIGKT) serves as a coordination point for ATP. The active-site Proton acceptor is Glu45. Gln86 provides a ligand contact to substrate. Arg176 lines the ATP pocket. Arg182 contributes to the substrate binding site.

It belongs to the herpesviridae thymidine kinase family. In terms of assembly, homodimer.

It catalyses the reaction thymidine + ATP = dTMP + ADP + H(+). Functionally, catalyzes the transfer of the gamma-phospho group of ATP to thymidine to generate dTMP in the salvage pathway of pyrimidine synthesis. The dTMP serves as a substrate for DNA polymerase during viral DNA replication. Allows the virus to be reactivated and to grow in non-proliferative cells lacking a high concentration of phosphorylated nucleic acid precursors. This chain is Thymidine kinase, found in Gallus gallus (Chicken).